The sequence spans 370 residues: Anhydro-N-acetylmuramic acid kinase (370 aa).

12–19 is an ATP binding site; sequence GTSLDGVD.

Belongs to the anhydro-N-acetylmuramic acid kinase family.

The enzyme catalyses 1,6-anhydro-N-acetyl-beta-muramate + ATP + H2O = N-acetyl-D-muramate 6-phosphate + ADP + H(+). Its pathway is amino-sugar metabolism; 1,6-anhydro-N-acetylmuramate degradation. It participates in cell wall biogenesis; peptidoglycan recycling. Functionally, catalyzes the specific phosphorylation of 1,6-anhydro-N-acetylmuramic acid (anhMurNAc) with the simultaneous cleavage of the 1,6-anhydro ring, generating MurNAc-6-P. Is required for the utilization of anhMurNAc either imported from the medium or derived from its own cell wall murein, and thus plays a role in cell wall recycling. The sequence is that of Anhydro-N-acetylmuramic acid kinase from Pectobacterium atrosepticum (strain SCRI 1043 / ATCC BAA-672) (Erwinia carotovora subsp. atroseptica).